A 547-amino-acid polypeptide reads, in one-letter code: Solute carrier family 22 member 7 (547 aa).

Residues 21–41 form a helical membrane-spanning segment; it reads VALLALPRVLLPMHFLLPIFL. Residues 91–103 are compositionally biased toward polar residues; the sequence is NSTLWGEGQNSGE. The tract at residues 91–112 is disordered; sequence NSTLWGEGQNSGEQPEGEPSTV. Helical transmembrane passes span 145–165, 179–199, 203–223, 233–253, 258–278, 345–365, 367–387, 403–423, 431–451, 465–485, and 492–512; these read AIST…GYLS, VSSL…MFAI, LTGM…LEWL, VLSS…GYLI, WLLL…WWVP, ISLC…GVSL, LSGL…VELP, LTMA…ILVS, TALA…AYLF, MGLT…AALL, and LPKL…LLLP. A disordered region spans residues 521–547; that stretch reads ETIQDVERKSAPSSLQEEEMPMKQVQD.

This sequence belongs to the major facilitator (TC 2.A.1) superfamily. Organic cation transporter (TC 2.A.1.19) family.

The protein resides in the basolateral cell membrane. Its subcellular location is the apical cell membrane. The protein localises to the cell membrane. The catalysed reaction is orotate(out) + L-glutamate(in) = orotate(in) + L-glutamate(out). It carries out the reaction 3',5'-cyclic GMP(in) = 3',5'-cyclic GMP(out). The enzyme catalyses GMP(in) = GMP(out). It catalyses the reaction 2'-deoxyguanosine(in) = 2'-deoxyguanosine(out). The catalysed reaction is GDP(in) = GDP(out). It carries out the reaction guanosine(in) = guanosine(out). The enzyme catalyses GTP(in) = GTP(out). It catalyses the reaction 3',5'-cyclic AMP(in) = 3',5'-cyclic AMP(out). The catalysed reaction is creatinine(in) = creatinine(out). It carries out the reaction prostaglandin E2(out) = prostaglandin E2(in). The enzyme catalyses 2-oxoglutarate(in) = 2-oxoglutarate(out). It catalyses the reaction glutarate(in) = glutarate(out). The catalysed reaction is urate(out) = urate(in). It carries out the reaction estrone 3-sulfate(out) = estrone 3-sulfate(in). Functionally, functions as a Na(+)-independent bidirectional multispecific transporter. Contributes to the renal and hepatic elimination of endogenous organic compounds from the systemic circulation into the urine and bile, respectively. Capable of transporting a wide range of purine and pyrimidine nucleobases, nucleosides and nucleotides, with cGMP, 2'deoxyguanosine and GMP being the preferred substrates. Functions as a pH- and chloride-independent cGMP bidirectional facilitative transporter that can regulate both intracellular and extracellular levels of cGMP and may be involved in cGMP signaling pathways. Mediates orotate/glutamate bidirectional exchange and most likely display a physiological role in hepatic release of glutamate into the blood. Involved in renal secretion and possible reabsorption of creatinine. Able to uptake prostaglandin E2 (PGE2) and may contribute to PGE2 renal excretion. Also transports alpha-ketoglutarate and urate. Apart from the orotate/glutamate exchange, the counterions for the uptake of other SLC22A7/OAT2 substrates remain to be identified. The sequence is that of Solute carrier family 22 member 7 (SLC22A7) from Bos taurus (Bovine).